The sequence spans 2752 residues: MASEVVCGLIFRLLLPICLAVACAFRYNGLSFVYLIYLLLIPLFSEPTKTTMQGHTGRLLKSLCFISLSFLLLHIIFHITLVSLEAQHRIAPGYNCSTWEKTFRQIGFESLKGADAGNGIRVFVPDIGMFIASLTIWLLCRNIVQKPVTDEAAQSNPEFENEELAEGEKIDSEEALIYEEDFNGGDGVEGELEESTKLKMFRRLASVASKLKEFIGNMITTAGKVVVTILLGSSGMMLPSLTSSVYFFVFLGLCTWWSWCRTFDPLLFSCLCVLLAIFTAGHLIGLYLYQFQFFQEAVPPNDYYARLFGIKSVIQTDCSSTWKIIVNPDLSWYHHANPILLLVMYYTLATLIRIWLQEPLVQDEGTKEEDKALACSPIQITAGRRRSLWYATHYPTDERKLLSMTQDDYKPSDGLLVTVNGNPVDYHTIHPSLPMENGPGKADLYSTPQYRWEPSDESSEKREEEEEEKEEFEEERSREEKRSIKVHAMVSVFQFIMKQSYICALIAMMAWSITYHSWLTFVLLIWSCTLWMIRNRRKYAMISSPFMVVYGNLLLILQYIWSFELPEIKKVPGFLEKKEPGELASKILFTITFWLLLRQHLTEQKALQEKEALLSEVKIGSQENEEKDEELQDIQVEGEPKEEEEEEAKEEKQERKKVEQEEAEEEDEQDIMKVLGNLVVAMFIKYWIYVCGGMFFFVSFEGKIVMYKIIYMVLFLFCVALYQVHYEWWRKILKYFWMSVVIYTMLVLIFIYTYQFENFPGLWQNMTGLKKEKLEDLGLKQFTVAELFTRIFIPTSFLLVCILHLHYFHDRFLELTDLKSIPSKEDNTIYRLAHPEGSLPDLTMMHLTASLEKPEVRKLAEPGEEKLEGYSEKAQKGDLGKDSEESEEDGEEEEESEEEEETSDLRNKWHLVIDRLTVLFLKFLEYFHKLQVFMWWILELHIIKIVSSYIIWVSVKEVSLFNYVFLISWAFALPYAKLRRLASSVCTVWTCVIIVCKMLYQLQTIKPENFSVNCSLPNENQTNIPFNELNKSLLYSAPIDPTEWVGLRKSSPLLVYLRNNLLMLAILAFEVTIYRHQEYYRGRNNLTAPVSRTIFHDITRLHLDDGLINCAKYFINYFFYKFGLETCFLMSVNVIGQRMDFYAMIHACWLIAVLYRRRRKAIAEIWPKYCCFLACIITFQYFICIGIPPAPCRDYPWRFKGASFNDNIIKWLYFPDFIVRPNPVFLVYDFMLLLCASLQRQIFEDENKAAVRIMAGDNVEICMNLDAASFSQHNPVPDFIHCRSYLDMSKVIIFSYLFWFVLTIIFITGTTRISIFCMGYLVACFYFLLFGGDLLLKPIKSILRYWDWLIAYNVFVITMKNILSIGACGYIGTLVHNSCWLIQAFSLACTVKGYQMPAANSPCTLPSGEAGIIWDSICFAFLLLQRRVFMSYYFLHVVADIKASQILASRGAELFQATIVKAVKARIEEEKKSMDQLKRQMDRIKARQQKYKKGKERMLSLTQEPGEGQDMQKLSEEDDEREADKQKAKGKKKQWWRPWVDHASMVRSGDYYLFETDSEEEEEEELKKEDEEPPRRSAFQFVYQAWITDPKTALRQRHKEKKRSAREERKRRRKGSKEGPVEWEDREDEPIKKKSDGPDNIIKRIFNILKFTWVLFLATVDSFTTWLNSISREHIDISTVLRIERCMLTREIKKGNVPTRESIHMYYQNHIMNLSRESGLDTIDEHPGAASGAQTAHRMDSLDSHDSISSEPTQCTMLYSRQGTTETIEEVEAEQEEEAGSTAPEPREAKEYEATGYDVGAMGAEEASLTPEEELTQFSTLDGDVEAPPSYSKAVSFEHLSFGSQDDSAGKNRMAVSPDDSRTDKLGSSILPPLTHELTASELLLKKMFHDDELEESEKFYVGQPRFLLLFYAMYNTLVARSEMVCYFVIILNHMVSASMITLLLPILIFLWAMLSVPRPSRRFWMMAIVYTEVAIVVKYFFQFGFFPWNKNVEVNKDKPYHPPNIIGVEKKEGYVLYDLIQLLALFFHRSILKCHGLWDEDDMTESGMAREESDDELSLGHGRRDSSDSLKSINLAASVESVHVTFPEQQTAVRRKRSGSSSEPSQRSSFSSNRSQRGSTSTRNSSQKGSSVLSIKQKGKRELYMEKLQEHLIKAKAFTIKKTLEIYVPIKQFFYNLIHPEYSAVTDVYVLMFLADTVDFIIIVFGFWAFGKHSAAADITSSLSEDQVPGPFLVMVLIQFGTMVVDRALYLRKTVLGKVIFQVILVFGIHFWMFFILPGVTERKFSQNLVAQLWYFVKCVYFGLSAYQIRCGYPTRVLGNFLTKSYNYVNLFLFQGFRLVPFLTELRAVMDWVWTDTTLSLSSWICVEDIYAHIFILKCWRESEKRYPQPRGQKKKKVVKYGMGGMIIVLLICIVWFPLLFMSLIKSVAGVINQPLDVSVTITLGGYQPIFTMSAQQSQLKVMDQQSFNKFIQAFSRDTGAMQFLENYEKEDITVAELEGNSNSLWTISPPSKQKMIHELLDPNSSFSVVFSWSIQRNLSLGAKSEIATDKLSFPLKNITRKNIAKMIAGNSTESSKTPVTIEKIYPYYVKAPSDSNSKPIKQLLSENNFMDITIILSRDNTTKYNSEWWVLNLTGNRIYNPNSQALELVVFNDKVSPPSLGFLAGYGIMGLYASVVLVIGKFVREFFSGISHSIMFEELPNVDRILKLCTDIFLVRETGELELEEDLYAKLIFLYRSPETMIKWTREKTN.

At 1–12 (MASEVVCGLIFR) the chain is on the cytoplasmic side. A helical membrane pass occupies residues 13–24 (LLLPICLAVACA). At 25–30 (FRYNGL) the chain is on the extracellular side. Residues 31–43 (SFVYLIYLLLIPL) form a helical membrane-spanning segment. Residues 44–50 (FSEPTKT) are Cytoplasmic-facing. Residues 51–76 (TMQGHTGRLLKSLCFISLSFLLLHII) traverse the membrane as a helical segment. Over 77-122 (FHITLVSLEAQHRIAPGYNCSTWEKTFRQIGFESLKGADAGNGIRV) the chain is Extracellular. N-linked (GlcNAc...) asparagine glycosylation occurs at Asn95. Residues 123–141 (FVPDIGMFIASLTIWLLCR) traverse the membrane as a helical segment. Over 142-221 (NIVQKPVTDE…KEFIGNMITT (80 aa)) the chain is Cytoplasmic. A helical membrane pass occupies residues 222-237 (AGKVVVTILLGSSGMM). The Extracellular segment spans residues 238 to 240 (LPS). A helical membrane pass occupies residues 241–258 (LTSSVYFFVFLGLCTWWS). The Cytoplasmic segment spans residues 259 to 264 (WCRTFD). A helical transmembrane segment spans residues 265-287 (PLLFSCLCVLLAIFTAGHLIGLY). The Extracellular segment spans residues 288 to 335 (LYQFQFFQEAVPPNDYYARLFGIKSVIQTDCSSTWKIIVNPDLSWYHH). A helical membrane pass occupies residues 336–355 (ANPILLLVMYYTLATLIRIW). The Cytoplasmic segment spans residues 356–492 (LQEPLVQDEG…SIKVHAMVSV (137 aa)). The disordered stretch occupies residues 446–478 (STPQYRWEPSDESSEKREEEEEEKEEFEEERSR). Acidic residues predominate over residues 463-474 (EEEEEEKEEFEE). The chain crosses the membrane as a helical span at residues 493 to 514 (FQFIMKQSYICALIAMMAWSIT). Residues 515 to 519 (YHSWL) are Extracellular-facing. A helical membrane pass occupies residues 520–531 (TFVLLIWSCTLW). At 532–535 (MIRN) the chain is on the cytoplasmic side. Residues 536–562 (RRKYAMISSPFMVVYGNLLLILQYIWS) traverse the membrane as a helical segment. Over 563–583 (FELPEIKKVPGFLEKKEPGEL) the chain is Extracellular. A helical membrane pass occupies residues 584–614 (ASKILFTITFWLLLRQHLTEQKALQEKEALL). The Cytoplasmic segment spans residues 615–685 (SEVKIGSQEN…GNLVVAMFIK (71 aa)). Residues 623 to 632 (ENEEKDEELQ) show a composition bias toward acidic residues. Residues 623-664 (ENEEKDEELQDIQVEGEPKEEEEEEAKEEKQERKKVEQEEAE) are disordered. Residues 649–660 (KEEKQERKKVEQ) show a composition bias toward basic and acidic residues. A helical transmembrane segment spans residues 686-699 (YWIYVCGGMFFFVS). Residues 700 to 705 (FEGKIV) lie on the Extracellular side of the membrane. The chain crosses the membrane as a helical span at residues 706–724 (MYKIIYMVLFLFCVALYQV). Topologically, residues 725–733 (HYEWWRKIL) are cytoplasmic. A helical membrane pass occupies residues 734–753 (KYFWMSVVIYTMLVLIFIYT). The Extracellular portion of the chain corresponds to 754 to 785 (YQFENFPGLWQNMTGLKKEKLEDLGLKQFTVA). Residues 786–807 (ELFTRIFIPTSFLLVCILHLHY) form a helical membrane-spanning segment. Residues 808–940 (FHDRFLELTD…QVFMWWILEL (133 aa)) lie on the Cytoplasmic side of the membrane. Ser838 carries the phosphoserine modification. A compositionally biased stretch (basic and acidic residues) spans 862–883 (PGEEKLEGYSEKAQKGDLGKDS). A disordered region spans residues 862–902 (PGEEKLEGYSEKAQKGDLGKDSEESEEDGEEEEESEEEEET). Acidic residues predominate over residues 884–902 (EESEEDGEEEEESEEEEET). A helical transmembrane segment spans residues 941–956 (HIIKIVSSYIIWVSVK). Over 957 to 962 (EVSLFN) the chain is Extracellular. The chain crosses the membrane as a helical span at residues 963–972 (YVFLISWAFA). Residues 973-980 (LPYAKLRR) are Cytoplasmic-facing. Residues 981–1001 (LASSVCTVWTCVIIVCKMLYQ) form a helical membrane-spanning segment. Topologically, residues 1002–1057 (LQTIKPENFSVNCSLPNENQTNIPFNELNKSLLYSAPIDPTEWVGLRKSSPLLVYL) are extracellular. Asn1013 carries N-linked (GlcNAc...) asparagine glycosylation. Residues Cys1014 and Cys1192 are joined by a disulfide bond. The chain crosses the membrane as a helical span at residues 1058-1082 (RNNLLMLAILAFEVTIYRHQEYYRG). Residues 1083–1123 (RNNLTAPVSRTIFHDITRLHLDDGLINCAKYFINYFFYKFG) are Cytoplasmic-facing. The helical transmembrane segment at 1124–1138 (LETCFLMSVNVIGQR) threads the bilayer. The Extracellular segment spans residues 1139 to 1140 (MD). The chain crosses the membrane as a helical span at residues 1141–1154 (FYAMIHACWLIAVL). Over 1155 to 1165 (YRRRRKAIAEI) the chain is Cytoplasmic. Residues 1166–1185 (WPKYCCFLACIITFQYFICI) form a helical membrane-spanning segment. Residues 1186 to 1222 (GIPPAPCRDYPWRFKGASFNDNIIKWLYFPDFIVRPN) are Extracellular-facing. The chain crosses the membrane as a helical span at residues 1223–1243 (PVFLVYDFMLLLCASLQRQIF). The Cytoplasmic portion of the chain corresponds to 1244 to 1297 (EDENKAAVRIMAGDNVEICMNLDAASFSQHNPVPDFIHCRSYLDMSKVIIFSYL). The chain crosses the membrane as a helical span at residues 1298-1310 (FWFVLTIIFITGT). The Extracellular portion of the chain corresponds to 1311–1316 (TRISIF). A helical membrane pass occupies residues 1317–1329 (CMGYLVACFYFLL). The Cytoplasmic portion of the chain corresponds to 1330–1338 (FGGDLLLKP). Residues 1339 to 1364 (IKSILRYWDWLIAYNVFVITMKNILS) form a helical membrane-spanning segment. The Extracellular segment spans residues 1365-1413 (IGACGYIGTLVHNSCWLIQAFSLACTVKGYQMPAANSPCTLPSGEAGII). The helical transmembrane segment at 1414-1430 (WDSICFAFLLLQRRVFM) threads the bilayer. Topologically, residues 1431–1921 (SYYFLHVVAD…YAMYNTLVAR (491 aa)) are cytoplasmic. Residues 1458–1529 (TIVKAVKARI…EREADKQKAK (72 aa)) adopt a coiled-coil conformation. Disordered stretches follow at residues 1488-1534 (QQKY…KKKQ), 1593-1636 (ALRQ…KKSD), and 1844-1868 (SQDD…KLGS). Basic residues predominate over residues 1594-1615 (LRQRHKEKKRSAREERKRRRKG). The chain crosses the membrane as a helical span at residues 1922–1936 (SEMVCYFVIILNHMV). Residues 1937–1943 (SASMITL) are Extracellular-facing. A helical membrane pass occupies residues 1944–1955 (LLPILIFLWAML). Residues 1956–1961 (SVPRPS) lie on the Cytoplasmic side of the membrane. A helical transmembrane segment spans residues 1962–1983 (RRFWMMAIVYTEVAIVVKYFFQ). Residues 1984 to 2016 (FGFFPWNKNVEVNKDKPYHPPNIIGVEKKEGYV) lie on the Extracellular side of the membrane. Residues 2017–2035 (LYDLIQLLALFFHRSILKC) traverse the membrane as a helical segment. Residues 2036–2189 (HGLWDEDDMT…HPEYSAVTDV (154 aa)) lie on the Cytoplasmic side of the membrane. 2 disordered regions span residues 2047-2069 (SGMA…DSSD) and 2090-2135 (QQTA…SVLS). Positions 2100 to 2127 (GSSSEPSQRSSFSSNRSQRGSTSTRNSS) are enriched in low complexity. A helical transmembrane segment spans residues 2190 to 2209 (YVLMFLADTVDFIIIVFGFW). The Extracellular portion of the chain corresponds to 2210-2231 (AFGKHSAAADITSSLSEDQVPG). A helical membrane pass occupies residues 2232-2252 (PFLVMVLIQFGTMVVDRALYL). Over 2253-2256 (RKTV) the chain is Cytoplasmic. The helical transmembrane segment at 2257–2280 (LGKVIFQVILVFGIHFWMFFILPG) threads the bilayer. The Extracellular segment spans residues 2281 to 2289 (VTERKFSQN). Residues 2290-2312 (LVAQLWYFVKCVYFGLSAYQIRC) traverse the membrane as a helical segment. Residues 2313-2397 (GYPTRVLGNF…YPQPRGQKKK (85 aa)) lie on the Cytoplasmic side of the membrane. The helical transmembrane segment at 2398–2421 (KVVKYGMGGMIIVLLICIVWFPLL) threads the bilayer. Residues 2422 to 2669 (FMSLIKSVAG…PSLGFLAGYG (248 aa)) are Extracellular-facing. A helical membrane pass occupies residues 2670-2690 (IMGLYASVVLVIGKFVREFFS). At 2691 to 2752 (GISHSIMFEE…MIKWTREKTN (62 aa)) the chain is on the cytoplasmic side.

The protein belongs to the PIEZO (TC 1.A.75) family. In terms of assembly, homotrimer; the homotrimer forms a propeller-shaped Piezo channel with a cation-ion conducting pore. Heterotrimeric interaction may occur between PIEZO1 and PIEZO2. Interacts with STOML3. Interacts with TMC7; the interaction inhibits PIEZO2-conducted mechanically activated currents. Interacts with TMC1; the interaction may be part of the MET complex. Interacts with MDFIC (via C-terminus); the interaction prolongs Piezo channel inactivation. Interacts with MDFI (via C-terminus); the interaction prolongs Piezo channel inactivation.

It localises to the cell membrane. It carries out the reaction Ca(2+)(in) = Ca(2+)(out). Its activity is regulated as follows. Regulated by auxillary subunits MDFIC and MDFI. Channel activity is inhibited by TMEM120A. Phosphatidic acid and lysophosphatidic acid inhibit PIEZO2 channel activity. Pore-forming subunit of the mechanosensitive non-specific cation Piezo channel required for rapidly adapting mechanically activated (MA) currents and has a key role in sensing touch and tactile pain. Piezo channels are homotrimeric three-blade propeller-shaped structures that utilize a cap-motion and plug-and-latch mechanism to gate their ion-conducting pathways. Expressed in sensory neurons, is essential for diverse physiological processes, including respiratory control, systemic metabolism, urinary function, and proprioception. Mediates airway stretch sensing, enabling efficient respiration at birth and maintaining normal breathing in adults. It regulates brown and beige adipose tissue morphology and function, preventing systemic hypermetabolism. In the lower urinary tract, acts as a sensor in both the bladder urothelium and innervating sensory neurons being required for bladder-stretch sensing and urethral micturition reflexes, ensuring proper urinary function. Additionally, PIEZO2 serves as the principal mechanotransducer in proprioceptors, facilitating proprioception and coordinated body movements. In inner ear hair cells, PIEZO1/2 subunits may constitute part of the mechanotransducer (MET) non-selective cation channel complex where they may act as pore-forming ion-conducting component in the complex. Required for Merkel-cell mechanotransduction. Plays a major role in light-touch mechanosensation. This is Piezo-type mechanosensitive ion channel component 2 from Homo sapiens (Human).